Reading from the N-terminus, the 460-residue chain is Centrosomal protein CEP57L1 (460 aa).

Serine 49 is modified (phosphoserine). Coiled coils occupy residues 51 to 228 (NSQA…EISK) and 317 to 384 (ISIC…LKKH). The span at 399-410 (KMSEASGIQQED) shows a compositional bias: polar residues. A disordered region spans residues 399–423 (KMSEASGIQQEDSYPKGSKNIKNSP).

Belongs to the translokin family.

Its subcellular location is the cytoplasm. It localises to the cytoskeleton. It is found in the microtubule organizing center. The protein localises to the centrosome. Centrosomal protein which may be required for microtubule attachment to centrosomes. The chain is Centrosomal protein CEP57L1 (CEP57L1) from Homo sapiens (Human).